We begin with the raw amino-acid sequence, 141 residues long: Flagellar assembly factor FliW (141 aa).

The protein belongs to the FliW family. Interacts with translational regulator CsrA and flagellin(s).

The protein localises to the cytoplasm. Functionally, acts as an anti-CsrA protein, binds CsrA and prevents it from repressing translation of its target genes, one of which is flagellin. Binds to flagellin and participates in the assembly of the flagellum. The polypeptide is Flagellar assembly factor FliW (Clostridium beijerinckii (strain ATCC 51743 / NCIMB 8052) (Clostridium acetobutylicum)).